The following is an 826-amino-acid chain: (2S)-3-sulfopropanediol dehydratase (826 aa).

A PFL domain is found at 33-695 (PRVNRLRQAF…NTNASIDGRK (663 aa)). Residue cysteine 464 is the Cysteine radical intermediate of the active site. Glutamate 466 functions as the Proton acceptor in the catalytic mechanism. The region spanning 706–826 (PVHTDGGSHD…DLIQRTELHF (121 aa)) is the Glycine radical domain. Glycine 802 carries the post-translational modification Glycine radical.

The protein belongs to the glycyl radical enzyme (GRE) family. In terms of processing, requires the activating protein HpfH to generate the key active site glycyl radical on Gly-802 that is involved in catalysis.

It catalyses the reaction (2S)-3-sulfopropanediol = 3-oxopropane-1-sulfonate + H2O. It participates in organosulfur degradation; alkanesulfonate degradation. Functionally, involved in the degradation of the organosulfur compound 2(S)-dihydroxypropanesulfonate (DHPS). Catalyzes the radical-mediated dehydration of DHPS to produce 3-sulfopropionaldehyde (3-oxopropane-1-sulfonate). In Klebsiella oxytoca, this protein is (2S)-3-sulfopropanediol dehydratase.